A 721-amino-acid polypeptide reads, in one-letter code: Polyribonucleotide nucleotidyltransferase (721 aa).

The Mg(2+) site is built by D495 and D501. Residues 562–621 (PRLLSFRIDPELIGTVIGPGGRTIKGITERTNTKIDIEDGGIVTIASHDGAAAEEAQKII) enclose the KH domain. Residues 631–699 (GEIFPGVVTR…SRGRINLTLR (69 aa)) enclose the S1 motif domain.

This sequence belongs to the polyribonucleotide nucleotidyltransferase family. It depends on Mg(2+) as a cofactor.

It localises to the cytoplasm. The catalysed reaction is RNA(n+1) + phosphate = RNA(n) + a ribonucleoside 5'-diphosphate. In terms of biological role, involved in mRNA degradation. Catalyzes the phosphorolysis of single-stranded polyribonucleotides processively in the 3'- to 5'-direction. This chain is Polyribonucleotide nucleotidyltransferase, found in Prochlorococcus marinus subsp. pastoris (strain CCMP1986 / NIES-2087 / MED4).